A 250-amino-acid chain; its full sequence is Small ribosomal subunit protein uS3 (250 aa).

The region spanning 39-107 (VRAALKKRLY…EVHLNIVEIR (69 aa)) is the KH type-2 domain. Residues 215–250 (LDKRLATESGPAGEGGGRERGDRPDRGDRRDRRDRA) form a disordered region. Positions 230 to 250 (GGRERGDRPDRGDRRDRRDRA) are enriched in basic and acidic residues.

It belongs to the universal ribosomal protein uS3 family. As to quaternary structure, part of the 30S ribosomal subunit. Forms a tight complex with proteins S10 and S14.

Functionally, binds the lower part of the 30S subunit head. Binds mRNA in the 70S ribosome, positioning it for translation. This is Small ribosomal subunit protein uS3 from Caulobacter vibrioides (strain ATCC 19089 / CIP 103742 / CB 15) (Caulobacter crescentus).